The sequence spans 400 residues: MNPASVPPALPPPGQQVIHVTQDLDTDLEALFNSVMNPKPSSWRKKILPESFFKEPDSGSHSRQSSTDSSGGHAGPRLAGGAQHVRSHSSPASLQLGPGAGAAGSPAQQHAHLRQQSYDVTDELPLPPGWEMTFTATGQRYFLNHIEKITTWQDPRKAMNQSLNPMNLHPAATSTPASQRSMAVSQPNLVMNHQHQQQMAPTNLSQQNHPTQNPPAGLMSMPNALTTQQQQQQKLRLQRIQMERERIRMRQEELMRQEAALCRQLPMEAETLATVQAAVNPPAMTPDMRSITNNSSDPFLNGGPYHSREQSTDSGLGLGCYSVPTTPEDFLSNVDEMDTGENAGQTPMNINPQQTRFPDFLDCLPGTNVDLGTLESEDLIPLFNDVESALNKSEPFLTWL.

A Glycyl lysine isopeptide (Lys-Gly) (interchain with G-Cter in ubiquitin) cross-link involves residue Lys-46. The tract at residues 52 to 117 (FFKEPDSGSH…QQHAHLRQQS (66 aa)) is disordered. The span at 61–70 (HSRQSSTDSS) shows a compositional bias: polar residues. Phosphoserine occurs at positions 62 and 89. Over residues 91-110 (PASLQLGPGAGAAGSPAQQH) the composition is skewed to low complexity. The WW domain maps to 124–157 (LPLPPGWEMTFTATGQRYFLNHIEKITTWQDPRK). A compositionally biased stretch (polar residues) spans 192–211 (NHQHQQQMAPTNLSQQNHPT). The tract at residues 192–216 (NHQHQQQMAPTNLSQQNHPTQNPPA) is disordered. The interval 222–400 (PNALTTQQQQ…NKSEPFLTWL (179 aa)) is required for interaction with PALS1. Phosphoserine occurs at positions 295 and 311. The PDZ-binding motif lies at 394 to 400 (EPFLTWL).

Binds to SLC9A3R2 via the PDZ motif at the plasma membrane. Binds to YWHAZ in vivo and in vitro through the phosphoserine-binding motif RSHSSP. Interacts (via coiled-coil domain) with SMAD2 (via MH1 domain), SMAD3 and SMAD4. Interacts with MED15. Interacts with PAX8 and NKX2-1. Interacts with TEAD1, TEAD2, TEAD3 and TEAD4. Interacts (via WW domain) with PALS1. Interacts with LATS1. Interacts with YAP1 (when phosphorylated at 'Ser-112'). Interacts (via WW domain) with PRRG4 (via cytoplasmic domain). Interacts (via WW domain) with AMOTL2 (via PPXY motif); the interaction promotes WWTR1/TAZ localization to the cytoplasm and tight junctions, thereby inhibiting its transcriptional coactivator properties. Interacts (via WW domain) with AMOT; the interaction facilitates translocation of WWTR1/TAZ to the cytoplasm. Phosphorylated by LATS2 and STK3/MST2. Phosphorylation by LATS2 results in creation of 14-3-3 binding sites, retention in the cytoplasm, and functional inactivation. Phosphorylation results in the inhibition of transcriptional coactivation through YWHAZ-mediated nuclear export. Post-translationally, ubiquitinated at Lys-46; leading to proteasomal degradation. Deubiquitinated and stabilized by UCHL1 at Lys-46; leading to inhibition of osteoclastogenesis.

The protein resides in the cytoplasm. The protein localises to the nucleus. It is found in the cell membrane. Its subcellular location is the cell junction. It localises to the tight junction. Functionally, transcriptional coactivator which acts as a downstream regulatory target in the Hippo signaling pathway that plays a pivotal role in organ size control and tumor suppression by restricting proliferation and promoting apoptosis. The core of this pathway is composed of a kinase cascade wherein STK3/MST2 and STK4/MST1, in complex with its regulatory protein SAV1, phosphorylates and activates LATS1/2 in complex with its regulatory protein MOB1, which in turn phosphorylates and inactivates YAP1 oncoprotein and WWTR1/TAZ. WWTR1 enhances PAX8 and NKX2-1/TTF1-dependent gene activation. In conjunction with YAP1, involved in the regulation of TGFB1-dependent SMAD2 and SMAD3 nuclear accumulation. Plays a key role in coupling SMADs to the transcriptional machinery such as the mediator complex. Regulates embryonic stem-cell self-renewal, promotes cell proliferation and epithelial-mesenchymal transition. This chain is WW domain-containing transcription regulator protein 1, found in Canis lupus familiaris (Dog).